A 1002-amino-acid polypeptide reads, in one-letter code: BLOC-2 complex member HPS3 (1002 aa).

The disordered stretch occupies residues 218–239 (GESVDHHPQETSNPLKEAEGVS).

As to quaternary structure, component of the biogenesis of lysosome-related organelles complex-2 (or BLOC2) composed of HPS3, HPS5 and HPS6. Interacts with HPS5 and HPS6. As to expression, found in heart, brain, spleen, liver, lung, kidney and testis.

It localises to the cytoplasm. The protein localises to the cytosol. Functionally, involved in early stages of melanosome biogenesis and maturation. This is BLOC-2 complex member HPS3 (Hps3) from Mus musculus (Mouse).